The following is a 358-amino-acid chain: Peptide chain release factor 1 (358 aa).

Gln-234 carries the post-translational modification N5-methylglutamine. Residues 283–306 (ERLHSERAGQRKSMVGSGDRSERI) are disordered.

Belongs to the prokaryotic/mitochondrial release factor family. Methylated by PrmC. Methylation increases the termination efficiency of RF1.

The protein localises to the cytoplasm. In terms of biological role, peptide chain release factor 1 directs the termination of translation in response to the peptide chain termination codons UAG and UAA. In Zymomonas mobilis subsp. mobilis (strain ATCC 31821 / ZM4 / CP4), this protein is Peptide chain release factor 1.